The sequence spans 208 residues: Uracil phosphoribosyltransferase (208 aa).

5-phospho-alpha-D-ribose 1-diphosphate contacts are provided by residues Arg78, Arg103, and 130 to 138 (DPMLAIGGS). Uracil-binding positions include Ile193 and 198–200 (GDA). Asp199 lines the 5-phospho-alpha-D-ribose 1-diphosphate pocket.

This sequence belongs to the UPRTase family. Mg(2+) serves as cofactor.

The enzyme catalyses UMP + diphosphate = 5-phospho-alpha-D-ribose 1-diphosphate + uracil. It participates in pyrimidine metabolism; UMP biosynthesis via salvage pathway; UMP from uracil: step 1/1. With respect to regulation, allosterically activated by GTP. Its function is as follows. Catalyzes the conversion of uracil and 5-phospho-alpha-D-ribose 1-diphosphate (PRPP) to UMP and diphosphate. The protein is Uracil phosphoribosyltransferase of Vibrio cholerae serotype O1 (strain ATCC 39315 / El Tor Inaba N16961).